A 246-amino-acid polypeptide reads, in one-letter code: E3 ubiquitin-protein ligase LubX (246 aa).

U-box domains lie at 36-109 (TTPT…QTNY) and 131-204 (EIPD…RKRE).

In terms of assembly, interacts with host CLK1. Post-translationally, ubiquitinated in the presence of host E1 ubiquitin-activating enzyme, E2 ubiquitin-conjugating enzyme (UBE2D1 or UBE2D3) and ubiquitin.

The protein resides in the secreted. It localises to the host cell. It catalyses the reaction S-ubiquitinyl-[E2 ubiquitin-conjugating enzyme]-L-cysteine + [acceptor protein]-L-lysine = [E2 ubiquitin-conjugating enzyme]-L-cysteine + N(6)-ubiquitinyl-[acceptor protein]-L-lysine.. Its function is as follows. Effector proteins function to alter host cell physiology and promote bacterial survival in host tissues. This protein is an E3 ubiquitin ligase that interferes with host's ubiquitination pathway. Acts in conjunction with host E2 ubiquitin-conjugating enzymes UBE2D1 (UBCH5A) or UBE2D3 (UBCH5C), and mediates polyubiquitination of host kinase CLK1. This Legionella pneumophila subsp. pneumophila (strain Philadelphia 1 / ATCC 33152 / DSM 7513) protein is E3 ubiquitin-protein ligase LubX (lubX).